A 1798-amino-acid polypeptide reads, in one-letter code: Focadhesin (1798 aa).

Lys816 is modified (N6-acetyllysine).

In terms of assembly, interacts with VCL. As to expression, expressed by glial and neuronal cells in brain.

The protein localises to the cell junction. The protein resides in the focal adhesion. Its subcellular location is the cytoplasm. It localises to the cytosol. Functionally, required for the maintenance of SKIC2 and SKIC3 proteostatic levels in the liver. May be involved in the regulation of RNA degradation by the exosome complex. Potential tumor suppressor in gliomas. This Mus musculus (Mouse) protein is Focadhesin (Focad).